We begin with the raw amino-acid sequence, 595 residues long: Chaperone protein HscA homolog (595 aa).

The protein belongs to the heat shock protein 70 family.

Chaperone involved in the maturation of iron-sulfur cluster-containing proteins. Has a low intrinsic ATPase activity which is markedly stimulated by HscB. The protein is Chaperone protein HscA homolog of Rickettsia africae (strain ESF-5).